The chain runs to 382 residues: ATP phosphoribosyltransferase regulatory subunit (382 aa).

It belongs to the class-II aminoacyl-tRNA synthetase family. HisZ subfamily. Heteromultimer composed of HisG and HisZ subunits.

The protein resides in the cytoplasm. The protein operates within amino-acid biosynthesis; L-histidine biosynthesis; L-histidine from 5-phospho-alpha-D-ribose 1-diphosphate: step 1/9. Functionally, required for the first step of histidine biosynthesis. May allow the feedback regulation of ATP phosphoribosyltransferase activity by histidine. The polypeptide is ATP phosphoribosyltransferase regulatory subunit (Lacticaseibacillus casei (strain BL23) (Lactobacillus casei)).